The chain runs to 695 residues: Polyribonucleotide nucleotidyltransferase (695 aa).

The Mg(2+) site is built by aspartate 486 and aspartate 492. One can recognise a KH domain in the interval 553 to 612 (PRIETMQINTSKIATVIGPGGKQIRQIIERSGAQVDINDDGVINIAASTQESINKAKELI). The S1 motif domain maps to 622 to 690 (GKVYNGRVTS…EKGQLKLSHK (69 aa)).

The protein belongs to the polyribonucleotide nucleotidyltransferase family. Mg(2+) serves as cofactor.

The protein localises to the cytoplasm. The catalysed reaction is RNA(n+1) + phosphate = RNA(n) + a ribonucleoside 5'-diphosphate. In terms of biological role, involved in mRNA degradation. Catalyzes the phosphorolysis of single-stranded polyribonucleotides processively in the 3'- to 5'-direction. In Chlamydia trachomatis serovar D (strain ATCC VR-885 / DSM 19411 / UW-3/Cx), this protein is Polyribonucleotide nucleotidyltransferase.